The chain runs to 319 residues: Pantothenate kinase (319 aa).

Position 97 to 104 (97 to 104 (GSVAVGKS)) interacts with ATP.

It belongs to the prokaryotic pantothenate kinase family.

It localises to the cytoplasm. The enzyme catalyses (R)-pantothenate + ATP = (R)-4'-phosphopantothenate + ADP + H(+). Its pathway is cofactor biosynthesis; coenzyme A biosynthesis; CoA from (R)-pantothenate: step 1/5. This is Pantothenate kinase from Chelativorans sp. (strain BNC1).